Reading from the N-terminus, the 432-residue chain is Polypyrimidine tract-binding protein homolog 3 (432 aa).

RRM domains lie at 6 to 80, 98 to 187, 245 to 319, and 355 to 429; these read KVVH…FSSH, NRIL…YNND, CTVL…FSKH, and KMIH…FSQL.

The protein localises to the nucleus. Plays a role in pre-mRNA splicing. Binds to the polypyrimidine tract of introns. May promote the binding of U2 snRNP to pre-mRNA. The protein is Polypyrimidine tract-binding protein homolog 3 of Arabidopsis thaliana (Mouse-ear cress).